A 594-amino-acid chain; its full sequence is DNA mismatch repair protein MutL (594 aa).

This sequence belongs to the DNA mismatch repair MutL/HexB family.

Its function is as follows. This protein is involved in the repair of mismatches in DNA. It is required for dam-dependent methyl-directed DNA mismatch repair. May act as a 'molecular matchmaker', a protein that promotes the formation of a stable complex between two or more DNA-binding proteins in an ATP-dependent manner without itself being part of a final effector complex. This is DNA mismatch repair protein MutL from Tolumonas auensis (strain DSM 9187 / NBRC 110442 / TA 4).